We begin with the raw amino-acid sequence, 1314 residues long: Enfumafungin synthase efuA (1314 aa).

The terpenne cyclase stretch occupies residues 1-680 (MPSYHNTDKT…RYIDKASRQG (680 aa)). PFTB repeat units follow at residues 19–62 (LQQA…ELSL) and 66–107 (GPEI…RILG). Helical transmembrane passes span 133–153 (FFTR…IPQM), 155–175 (AELI…SSWA), and 230–250 (YQWI…FGGL). One copy of the PFTB 3 repeat lies at 260–300 (LKRCTAWLLEHQEESGDWAGFFPPIHGSIWALLLDGFSFQS). Aspartate 395 (proton donor) is an active-site residue. 2 PFTB repeats span residues 417–458 (VMNG…DSLV) and 546–597 (CMRT…LRFR). The segment at 681-1314 (IETLRIPSSS…ADSVLDIEEK (634 aa)) is glycosyltransferase. A helical membrane pass occupies residues 1200–1220 (AIVQLLYGFTTTILALFGWLK). Residues 1289 to 1314 (DSGASESSRSSLDGGHADSVLDIEEK) form a disordered region. Over residues 1292–1302 (ASESSRSSLDG) the composition is skewed to low complexity.

This sequence in the N-terminal section; belongs to the terpene cyclase/mutase family. In the C-terminal section; belongs to the glycosyltransferase 28 family.

It is found in the membrane. It participates in secondary metabolite biosynthesis; terpenoid biosynthesis. Terpene cyclase-glycosyl transferase fusion protein; part of the gene cluster that mediates the biosynthesis of enfumafungin, a glycosylated fernene-type triterpenoid with potent antifungal activity, mediated by its interaction with beta-1,3-glucan synthase and the fungal cell wall. The pathway begins with the terpene cyclase-glycosyl transferase fusion protein that most likely uses 2,3-oxidosqualene as substrate and catalyzes glycosylation immediately after cyclization. The fernene glycoside then could be processed by the desaturase efuI which catalyzes isomerization of a double bond established by efuA to form the core structure. The latter would then undergo a series of hydroxylations in unknown order at C-2, C-19, C-23 and C-25, which would be catalyzed by two of the three cytochrome P450 monooxygenases efuB, efuG or efuH. The hydroxy-group at C-25 becomes oxidized by the dehydrogenase efuE to enable a spontaneous, non-enzymatic hemiacetal formation with C-23. After hydroxylation at C-2, acetylation by the acetyltransferase efuC takes place. The final steps in enfumafungin biosynthesis require expansion of the 5-membered ring by lactonization via a Baeyer-Villiger reaction mediated by one of the BGC's cytochrome P450 monooxygenases (efuB, efuG or efuH) followed by ring cleavage. This type of reaction would establish a double bond between C-20 and C-21 which could be reduced by the reductase efuL to form the final product. The chain is Enfumafungin synthase efuA from Hormonema carpetanum.